The primary structure comprises 412 residues: MGDSPKCLRDSLREALRRREDKLCRRKLTILPSSSVDFSSNDFLSLSTSPAYRARFLDILQQAPPLHPFASGGSRLLDGNSAYAEELENFIAAFHNAPSGLLFNSGYDANVGVFSSIPQPGDLIVYDELIHASAHEGMRLSRAGKRIKFPHSSPDGLRAVLQAEITADPRLLQGRRNVFIAFESVYSMDGDVAPIREFVEIVDQLLPYGNGYFLVDEAHATGVFGPRGSGVVQELGLEDRMFVRVHTFGKALASHGAIVLCCADTRDYLINYARSLIYTTALGFPFLASIRAAYELLVEGKTEQLQHKLGQLIAHFRTGLDNLNHKDSSTFEVEHFTNSPIFSLRSSVPRVLASVCQEQGYTVRAIMPPTVPAGKERVRVCLHAGNTVEEVDGLLETIATWLQRMEKQKARL.

Residue 106–107 coordinates pyridoxal 5'-phosphate; it reads GY. His131 serves as a coordination point for substrate. Ser187, His219, and Thr247 together coordinate pyridoxal 5'-phosphate. Lys250 carries the N6-(pyridoxal phosphate)lysine modification. Thr370 lines the substrate pocket.

It belongs to the class-II pyridoxal-phosphate-dependent aminotransferase family. BioF subfamily. In terms of assembly, homodimer. Pyridoxal 5'-phosphate serves as cofactor.

The enzyme catalyses 6-carboxyhexanoyl-[ACP] + L-alanine + H(+) = (8S)-8-amino-7-oxononanoate + holo-[ACP] + CO2. It functions in the pathway cofactor biosynthesis; biotin biosynthesis. 8-amino-7-oxononanoate synthase; part of the cluster involved in the biosynthesis of biotin (also known as vitamin B8 or vitamin H), a water-soluble vitamin that functions as a prosthetic group of many carboxylases, such as acetyl-CoA carboxylase and pyruvate carboxylase. Catalyzes the decarboxylative condensation of pimeloyl-[acyl-carrier protein] and L-alanine to produce 8-amino-7-oxononanoate (AON). This is 8-amino-7-oxononanoate synthase from Emericella nidulans (strain FGSC A4 / ATCC 38163 / CBS 112.46 / NRRL 194 / M139) (Aspergillus nidulans).